A 109-amino-acid chain; its full sequence is Nucleoid-associated protein AHA_2212 (109 aa).

Disordered regions lie at residues 1 to 23 and 88 to 109; these read MFGKGGMGNLMKQAQQMQERMQK and NKSKMGELTGGMQLPPGFKMPF. Positions 11 to 23 are enriched in low complexity; sequence MKQAQQMQERMQK.

This sequence belongs to the YbaB/EbfC family. In terms of assembly, homodimer.

The protein resides in the cytoplasm. It localises to the nucleoid. Its function is as follows. Binds to DNA and alters its conformation. May be involved in regulation of gene expression, nucleoid organization and DNA protection. In Aeromonas hydrophila subsp. hydrophila (strain ATCC 7966 / DSM 30187 / BCRC 13018 / CCUG 14551 / JCM 1027 / KCTC 2358 / NCIMB 9240 / NCTC 8049), this protein is Nucleoid-associated protein AHA_2212.